We begin with the raw amino-acid sequence, 297 residues long: Bifunctional protein FolD (297 aa).

Residues 167–169 (GRS) and I233 contribute to the NADP(+) site.

Belongs to the tetrahydrofolate dehydrogenase/cyclohydrolase family. As to quaternary structure, homodimer.

The catalysed reaction is (6R)-5,10-methylene-5,6,7,8-tetrahydrofolate + NADP(+) = (6R)-5,10-methenyltetrahydrofolate + NADPH. The enzyme catalyses (6R)-5,10-methenyltetrahydrofolate + H2O = (6R)-10-formyltetrahydrofolate + H(+). Its pathway is one-carbon metabolism; tetrahydrofolate interconversion. Catalyzes the oxidation of 5,10-methylenetetrahydrofolate to 5,10-methenyltetrahydrofolate and then the hydrolysis of 5,10-methenyltetrahydrofolate to 10-formyltetrahydrofolate. This is Bifunctional protein FolD from Zymomonas mobilis subsp. mobilis (strain ATCC 31821 / ZM4 / CP4).